The primary structure comprises 61 residues: MAISKASIVVLMMVIISVVASAQSEAPAPSPTSGSSAISASFVSAGVAAVAALVFGSALRI.

A signal peptide spans 1-22; it reads MAISKASIVVLMMVIISVVASA. The residue at position 23 (Gln-23) is a Pyrrolidone carboxylic acid. Residues Pro-27, Pro-29, and Pro-31 each carry the 4-hydroxyproline modification. Pro-27, Pro-29, and Pro-31 each carry an O-linked (Ara...) hydroxyproline glycan. Residue Ser-35 is the site of GPI-anchor amidated serine attachment. A propeptide spans 36 to 61 (removed in mature form); sequence SAISASFVSAGVAAVAALVFGSALRI.

This sequence belongs to the AG-peptide AGP family. In terms of processing, contains 4-hydroxyproline; hydroxylated on Pro-27, Pro-29 and Pro-31. Post-translationally, O-glycosylated on hydroxyprolines; noncontiguous hydroxylproline residues are glycosylated with arabinogalactan. In terms of tissue distribution, expressed in reproductive tissues. Expressed in chalaza, funiculus, stigma, septum, style, integument and transmitting tract.

It localises to the cell membrane. Functionally, proteoglycan that seems to be implicated in diverse developmental roles such as differentiation, cell-cell recognition, embryogenesis and programmed cell death. This is Arabinogalactan protein 15 from Arabidopsis thaliana (Mouse-ear cress).